The following is a 208-amino-acid chain: N-(5'-phosphoribosyl)anthranilate isomerase (208 aa).

The protein belongs to the TrpF family.

The enzyme catalyses N-(5-phospho-beta-D-ribosyl)anthranilate = 1-(2-carboxyphenylamino)-1-deoxy-D-ribulose 5-phosphate. Its pathway is amino-acid biosynthesis; L-tryptophan biosynthesis; L-tryptophan from chorismate: step 3/5. This Neisseria meningitidis serogroup C / serotype 2a (strain ATCC 700532 / DSM 15464 / FAM18) protein is N-(5'-phosphoribosyl)anthranilate isomerase.